The primary structure comprises 139 residues: Large ribosomal subunit protein uL16 (139 aa).

The protein belongs to the universal ribosomal protein uL16 family. As to quaternary structure, part of the 50S ribosomal subunit.

Its function is as follows. Binds 23S rRNA and is also seen to make contacts with the A and possibly P site tRNAs. The polypeptide is Large ribosomal subunit protein uL16 (Rippkaea orientalis (strain PCC 8801 / RF-1) (Cyanothece sp. (strain PCC 8801))).